A 254-amino-acid polypeptide reads, in one-letter code: Insulin-like growth factor-binding protein 4 (254 aa).

A signal peptide spans 1-21; the sequence is MLPFGLVAALLLAAGPRPSLG. One can recognise an IGFBP N-terminal domain in the interval 23–103; sequence EAIHCPPCSE…MHGQGVCTEL (81 aa). Intrachain disulfides connect Cys27–Cys53, Cys30–Cys55, Cys38–Cys56, Cys44–Cys59, Cys67–Cys80, and Cys74–Cys100. Asn125 carries N-linked (GlcNAc...) asparagine glycosylation. Residues Cys131 and Cys138 are joined by a disulfide bond. A disordered region spans residues 149 to 169; that stretch reads RSKMKVVGTPREEPRPVPQGS. The Thyroglobulin type-1 domain occupies 167–245; the sequence is QGSCQSELHR…GLEPKGELDC (79 aa). 3 disulfides stabilise this stretch: Cys170–Cys200, Cys211–Cys222, and Cys224–Cys245. Phosphoserine is present on Ser251.

Binds IGF2 more than IGF1.

The protein resides in the secreted. IGF-binding proteins prolong the half-life of the IGFs and have been shown to either inhibit or stimulate the growth promoting effects of the IGFs on cell culture. They alter the interaction of IGFs with their cell surface receptors. In Rattus norvegicus (Rat), this protein is Insulin-like growth factor-binding protein 4 (Igfbp4).